The sequence spans 190 residues: UPF0301 protein PSPPH_0476 (190 aa).

It belongs to the UPF0301 (AlgH) family.

This Pseudomonas savastanoi pv. phaseolicola (strain 1448A / Race 6) (Pseudomonas syringae pv. phaseolicola (strain 1448A / Race 6)) protein is UPF0301 protein PSPPH_0476.